A 613-amino-acid chain; its full sequence is Ribosome-associated molecular chaperone SSB2 (613 aa).

Ala2 carries the post-translational modification N-acetylalanine. Residues 2-391 (AEGVFQGAIG…ILTGQSTSDE (390 aa)) form a nucleotide binding domain (NBD) region. 16–18 (TTY) contributes to the ATP binding site. Residue Thr47 is modified to Phosphothreonine. ATP contacts are provided by residues Lys73, 205–207 (GGT), 271–278 (ERAKRTLS), and Gly342. The interval 392–402 (TKDLLLLDVAP) is inter-domain linker. The segment at 403–613 (LSLGVGMQGD…RVVTKAMSSR (211 aa)) is substrate binding domain (SBD). The short motif at 428 to 430 (KRR) is the Contributes to ribosome binding element. Thr431 is modified (phosphothreonine). The interval 516-612 (SEEIEKMVNQ…KRVVTKAMSS (97 aa)) is lid domain (SBDalpha). Positions 574-582 (IEAALSDAL) match the Nuclear export signal motif. Residues 601 to 613 (GLKRVVTKAMSSR) are required for interaction with ribosomes.

This sequence belongs to the heat shock protein 70 family. Ssb-type Hsp70 subfamily. As to quaternary structure, binds to ribosomes. Binds close to the ribosomal tunnel exit via contacts with both ribosomal proteins RPL35, RPL39 and RPL19, and rRNA. Directly interacts with nascent polypeptides. This interaction is dependent on the ribosome-associated complex (RAC). Interacts with SSE1.

The protein resides in the cytoplasm. It catalyses the reaction ATP + H2O = ADP + phosphate + H(+). Its function is as follows. Ribosome-bound, Hsp70-type chaperone that assists in the cotranslational folding of newly synthesized proteins in the cytosol. Stimulates folding by interacting with nascent chains, binding to short, largely hydrophobic sequences exposed by unfolded proteins, thereby stabilizing longer, more slowly translated, and aggregation-prone nascent polypeptides and domains that cannot fold stably until fully synthesized. The Hsp70-protein substrate interaction depends on ATP-binding and on allosteric regulation between the NBD and the SBD. The ATP-bound state is characterized by a fast exchange rate of substrate (low affinity state), while in the ADP-bound state exchange is much slower (high affinity state). During the Hsp70 cycle, the chaperone switches between the ATP-bound state (open conformation) and the ADP-bound state (closed conformation) by major conformational rearrangements involving mainly the lid domain. Ssb cooperates with a specific Hsp40/Hsp70 co-chaperone termed the ribosome-associated complex (RAC), which stimulates the ATPase activity of the ribosome-associated pool of Ssbs and switches it to the high affinity substrate binding state. Hsp110 chaperone SSE1 and FES1 act as nucleotide exchange factors that cause substrate release. This Saccharomyces cerevisiae (strain ATCC 204508 / S288c) (Baker's yeast) protein is Ribosome-associated molecular chaperone SSB2.